A 45-amino-acid chain; its full sequence is Large ribosomal subunit protein bL34 (45 aa).

This sequence belongs to the bacterial ribosomal protein bL34 family.

In Leifsonia xyli subsp. xyli (strain CTCB07), this protein is Large ribosomal subunit protein bL34.